Here is a 431-residue protein sequence, read N- to C-terminus: C4-dicarboxylate transport protein (431 aa).

Transmembrane regions (helical) follow at residues I8–P28, L44–M64, L78–L98, G148–G168, I188–I208, L222–A242, I307–L327, and A355–I375.

It belongs to the dicarboxylate/amino acid:cation symporter (DAACS) (TC 2.A.23) family.

The protein localises to the cell inner membrane. Functionally, responsible for the transport of dicarboxylates such as succinate, fumarate, and malate from the periplasm across the membrane. The sequence is that of C4-dicarboxylate transport protein from Cupriavidus pinatubonensis (strain JMP 134 / LMG 1197) (Cupriavidus necator (strain JMP 134)).